We begin with the raw amino-acid sequence, 248 residues long: Chitin deacetylase (248 aa).

Residues Met1–Arg26 form the signal peptide. 2 disulfide bridges follow: Cys38–Cys237 and Cys148–Cys152. Positions Gly42 to Val232 constitute a NodB homology domain. Asp49 functions as the Proton acceptor in the catalytic mechanism. Position 49 (Asp49) interacts with acetate. Residues Asp50, His104, and His108 each contribute to the Co(2+) site. An acetate-binding site is contributed by Tyr145. The Proton donor role is filled by His206.

This sequence belongs to the polysaccharide deacetylase family. As to quaternary structure, monomer. Co(2+) serves as cofactor. In terms of processing, N-glycosylated.

The protein resides in the secreted. It carries out the reaction [(1-&gt;4)-N-acetyl-beta-D-glucosaminyl](n) + n H2O = chitosan + n acetate. In terms of biological role, hydrolyzes the N-acetamido groups of N-acetyl-D-glucosamine polymers in chitin to form chitosan and acetate. May play a role in evasion of the host immune response; plant chitinases liberate chitin molecules from the fungal cell wall which act as elicitors of the plant immune response, deacetylation of the liberated chitin neutralizes elicitor activity. This chain is Chitin deacetylase, found in Colletotrichum lindemuthianum (Bean anthracnose fungus).